The sequence spans 327 residues: Phenylalanine--tRNA ligase alpha subunit (327 aa).

Glutamate 252 is a binding site for Mg(2+).

Belongs to the class-II aminoacyl-tRNA synthetase family. Phe-tRNA synthetase alpha subunit type 1 subfamily. As to quaternary structure, tetramer of two alpha and two beta subunits. Mg(2+) serves as cofactor.

Its subcellular location is the cytoplasm. It catalyses the reaction tRNA(Phe) + L-phenylalanine + ATP = L-phenylalanyl-tRNA(Phe) + AMP + diphosphate + H(+). The sequence is that of Phenylalanine--tRNA ligase alpha subunit from Shewanella frigidimarina (strain NCIMB 400).